Reading from the N-terminus, the 467-residue chain is Ribulose bisphosphate carboxylase large chain (467 aa).

The residue at position 5 (lysine 5) is an N6,N6,N6-trimethyllysine. The substrate site is built by asparagine 114 and threonine 164. The active-site Proton acceptor is the lysine 166. Lysine 168 is a binding site for substrate. Positions 192, 194, and 195 each coordinate Mg(2+). At lysine 192 the chain carries N6-carboxylysine. Catalysis depends on histidine 285, which acts as the Proton acceptor. Substrate contacts are provided by arginine 286, histidine 318, and serine 370.

It belongs to the RuBisCO large chain family. Type I subfamily. Heterohexadecamer of 8 large chains and 8 small chains; disulfide-linked. The disulfide link is formed within the large subunit homodimers. It depends on Mg(2+) as a cofactor. The disulfide bond which can form in the large chain dimeric partners within the hexadecamer appears to be associated with oxidative stress and protein turnover.

It localises to the plastid. Its subcellular location is the chloroplast. It carries out the reaction 2 (2R)-3-phosphoglycerate + 2 H(+) = D-ribulose 1,5-bisphosphate + CO2 + H2O. The enzyme catalyses D-ribulose 1,5-bisphosphate + O2 = 2-phosphoglycolate + (2R)-3-phosphoglycerate + 2 H(+). Its function is as follows. RuBisCO catalyzes two reactions: the carboxylation of D-ribulose 1,5-bisphosphate, the primary event in carbon dioxide fixation, as well as the oxidative fragmentation of the pentose substrate in the photorespiration process. Both reactions occur simultaneously and in competition at the same active site. The polypeptide is Ribulose bisphosphate carboxylase large chain (Eriodictyon californicum (California yerba santa)).